Consider the following 426-residue polypeptide: Glutamate-1-semialdehyde 2,1-aminomutase (426 aa).

The residue at position 265 (Lys-265) is an N6-(pyridoxal phosphate)lysine.

The protein belongs to the class-III pyridoxal-phosphate-dependent aminotransferase family. HemL subfamily. In terms of assembly, homodimer. Pyridoxal 5'-phosphate is required as a cofactor.

It localises to the cytoplasm. The enzyme catalyses (S)-4-amino-5-oxopentanoate = 5-aminolevulinate. The protein operates within porphyrin-containing compound metabolism; protoporphyrin-IX biosynthesis; 5-aminolevulinate from L-glutamyl-tRNA(Glu): step 2/2. In Cronobacter sakazakii (strain ATCC BAA-894) (Enterobacter sakazakii), this protein is Glutamate-1-semialdehyde 2,1-aminomutase.